The chain runs to 777 residues: Protein argonaute (777 aa).

The N-terminal domain stretch occupies residues 1–107 (MAPVQAADEM…ARLDDALEEA (107 aa)). A linker L1 region spans residues 108–182 (LPKYAAVKKR…TIGMRYDIEA (75 aa)). A PAZ domain region spans residues 183-243 (SLRDLLEAGI…VNVNDAKLEG (61 aa)). The interval 244 to 341 (SKENFTRCLS…DRTGAKSAEY (98 aa)) is linker L2. The segment at 342-509 (AWRGLSQFGP…SIATYAKLNG (168 aa)) is mid domain. Positions 445–757 (GIVVLFEDHA…IAELLGRLKS (313 aa)) constitute a Piwi domain. A PIWI domain region spans residues 510–777 (TPWTVNHDKA…IKLKWSRWFL (268 aa)). Residue Leu-777 coordinates Mg(2+).

This sequence belongs to the argonaute family. Long pAgo subfamily. It depends on Mg(2+) as a cofactor.

In terms of biological role, a catalytically inactive argonaute protein. Binds 5'-phosphorylated RNA as the guide (gRNA) and short DNA as target DNA (tDNA); does not bind other nucleic acid combinations, does not bind tDNA alone. Has highest affinity for gRNA that begins with 5'-phospho-U and poor affinity for gRNA with 5'-OH. Upon expression in E.coli, plasmid sequences are found in RsAgo, its induction leads to plasmid degradation and suppression of genes encoded on foreign plasmids, suggesting it may also interfere with transcription. Does not interact with preformed gRNA:tDNA duplexes. Mismatches and nt bulges are tolerated in the ternary complex, however, they significantly reduce the affinity of RsAgo:gRNA for tDNA. Mismatched tDNA can cause dissociation of gRNA from RsAgo. In situ binds 2 populations of RNA (15-19 and 45 nucleotides, nt) and a population of ssDNA 22-24 nt in length. The small sense RNA is probably derived from mRNA degradation and strongly enriched for U in the first and U/C in the second positions. The small DNA is enriched for sequences complementary to the RNA, with 3 nt overhangs on both ends; another nuclease may trim the ends. The sequences are largely derived from exogenous plasmids or genome-encoded foreign elements such as prophages and transposons. Forms a ternary complex with gRNA and double-stranded tDNA only when the tDNA is open. This Cereibacter sphaeroides (strain ATCC 17025 / ATH 2.4.3) (Rhodobacter sphaeroides) protein is Protein argonaute.